Consider the following 232-residue polypeptide: 2-C-methyl-D-erythritol 4-phosphate cytidylyltransferase (232 aa).

This sequence belongs to the IspD/TarI cytidylyltransferase family. IspD subfamily.

It carries out the reaction 2-C-methyl-D-erythritol 4-phosphate + CTP + H(+) = 4-CDP-2-C-methyl-D-erythritol + diphosphate. It participates in isoprenoid biosynthesis; isopentenyl diphosphate biosynthesis via DXP pathway; isopentenyl diphosphate from 1-deoxy-D-xylulose 5-phosphate: step 2/6. Its function is as follows. Catalyzes the formation of 4-diphosphocytidyl-2-C-methyl-D-erythritol from CTP and 2-C-methyl-D-erythritol 4-phosphate (MEP). This Stenotrophomonas maltophilia (strain R551-3) protein is 2-C-methyl-D-erythritol 4-phosphate cytidylyltransferase.